The following is a 392-amino-acid chain: 4-hydroxy-3-methylbut-2-en-1-yl diphosphate synthase (flavodoxin) (392 aa).

Cysteine 280, cysteine 283, cysteine 315, and glutamate 322 together coordinate [4Fe-4S] cluster. Residues 371 to 380 (TEKGSDHCSE) are compositionally biased toward basic and acidic residues. The interval 371-392 (TEKGSDHCSETTRSGSPVVTVN) is disordered. Residues 381 to 392 (TTRSGSPVVTVN) are compositionally biased toward polar residues.

It belongs to the IspG family. Requires [4Fe-4S] cluster as cofactor.

It catalyses the reaction (2E)-4-hydroxy-3-methylbut-2-enyl diphosphate + oxidized [flavodoxin] + H2O + 2 H(+) = 2-C-methyl-D-erythritol 2,4-cyclic diphosphate + reduced [flavodoxin]. It functions in the pathway isoprenoid biosynthesis; isopentenyl diphosphate biosynthesis via DXP pathway; isopentenyl diphosphate from 1-deoxy-D-xylulose 5-phosphate: step 5/6. In terms of biological role, converts 2C-methyl-D-erythritol 2,4-cyclodiphosphate (ME-2,4cPP) into 1-hydroxy-2-methyl-2-(E)-butenyl 4-diphosphate. The chain is 4-hydroxy-3-methylbut-2-en-1-yl diphosphate synthase (flavodoxin) from Mycobacterium leprae (strain Br4923).